The chain runs to 162 residues: FCS-Like Zinc finger 6 (162 aa).

Disordered stretches follow at residues 25-47 (NLPS…YGSN) and 121-162 (RQEQ…AAAV). A compositionally biased stretch (polar residues) spans 27-47 (PSESEPSNQQKPTVASPYGSN). The FLZ-type zinc-finger motif lies at 88-132 (HFLRSCALCERLLVPGRDIYMYRGDKAFCSSECRQEQMAQDERKE). A compositionally biased stretch (low complexity) spans 147-162 (APARAKPGKGRAAAAV).

It belongs to the FLZ family. As to quaternary structure, interacts with KIN10 and KIN11 via its FLZ-type zinc finger domain. Early expressed in hypocotyl and cotyledon. Later expressed in old or senescing leaves and in pistil, pollen and filament of open flowers.

Its subcellular location is the nucleus. The protein localises to the cytoplasm. It localises to the endoplasmic reticulum. May act as an adapter to facilitate the interaction of SnRK1 complex with effector proteins, conferring tissue- and stimulus-type specific differences in the SnRK1 regulation pathway. Negatively regulates KIN10 leading to a repression of the SnRK1 signaling pathway. The polypeptide is FCS-Like Zinc finger 6 (Arabidopsis thaliana (Mouse-ear cress)).